The primary structure comprises 107 residues: Early E3A 12.5 kDa protein (107 aa).

The protein belongs to the adenoviridae E3A-2 family.

This chain is Early E3A 12.5 kDa protein, found in Homo sapiens (Human).